Reading from the N-terminus, the 139-residue chain is Small ribosomal subunit protein uS12 (139 aa).

Residues 1 to 21 form a disordered region; it reads MSTVSQLIKKRRSSKTSKTKA. A compositionally biased stretch (basic residues) spans 8-18; that stretch reads IKKRRSSKTSK. Aspartate 102 carries the post-translational modification 3-methylthioaspartic acid.

It belongs to the universal ribosomal protein uS12 family. As to quaternary structure, part of the 30S ribosomal subunit. Contacts proteins S8 and S17. May interact with IF1 in the 30S initiation complex.

Its function is as follows. With S4 and S5 plays an important role in translational accuracy. Functionally, interacts with and stabilizes bases of the 16S rRNA that are involved in tRNA selection in the A site and with the mRNA backbone. Located at the interface of the 30S and 50S subunits, it traverses the body of the 30S subunit contacting proteins on the other side and probably holding the rRNA structure together. The combined cluster of proteins S8, S12 and S17 appears to hold together the shoulder and platform of the 30S subunit. This Aster yellows witches'-broom phytoplasma (strain AYWB) protein is Small ribosomal subunit protein uS12.